We begin with the raw amino-acid sequence, 1018 residues long: Contactin-1 (1018 aa).

The first 20 residues, 1–20 (MKMWLLFSLLVIISFKTCLS), serve as a signal peptide directing secretion. Ig-like C2-type domains follow at residues 41 to 131 (PIFE…ATLS), 137 to 223 (PFPP…KSVF), 241 to 326 (PADI…ARIY), 331 to 407 (PEWV…AELK), 413 to 500 (PTFE…GTLV), and 504 to 601 (PTRI…LVVR). Intrachain disulfides connect cysteine 65–cysteine 114 and cysteine 158–cysteine 211. Asparagine 208 and asparagine 258 each carry an N-linked (GlcNAc...) asparagine glycan. Cysteine 263 and cysteine 310 are disulfide-bonded. Asparagine 338 carries N-linked (GlcNAc...) asparagine glycosylation. 2 disulfide bridges follow: cysteine 352–cysteine 391 and cysteine 436–cysteine 484. N-linked (GlcNAc...) asparagine glycans are attached at residues asparagine 457, asparagine 473, asparagine 494, and asparagine 521. A disulfide bridge links cysteine 526 with cysteine 583. A glycan (N-linked (GlcNAc...) asparagine) is linked at asparagine 591. Fibronectin type-III domains lie at 606–704 (PPGG…TDGA), 709–806 (APSD…SAQD), 811–906 (APTA…APPS), and 907–1000 (QPPR…ILSP). Disordered stretches follow at residues 698–718 (KIKT…GGGG) and 891–910 (PPSD…QPPR). Serine 999 is lipidated: GPI-anchor amidated serine. Residues 1000–1018 (PCLLGFLLPALGILVYLEF) constitute a propeptide, removed in mature form.

It belongs to the immunoglobulin superfamily. Contactin family. Monomer. Interacts with CNTNAP1 in cis form. Binds to the carbonic-anhydrase like domain of PTPRZ1. Interacts with NOTCH1 and TNR. Detected in a complex with NRCAM and PTPRB. Interacts with TASOR.

Its subcellular location is the cell membrane. Its function is as follows. Contactins mediate cell surface interactions during nervous system development. Involved in the formation of paranodal axo-glial junctions in myelinated peripheral nerves and in the signaling between axons and myelinating glial cells via its association with CNTNAP1. Participates in oligodendrocytes generation by acting as a ligand of NOTCH1. Its association with NOTCH1 promotes NOTCH1 activation through the released notch intracellular domain (NICD) and subsequent translocation to the nucleus. Interaction with TNR induces a repulsion of neurons and an inhibition of neurite outgrowth. This Bos taurus (Bovine) protein is Contactin-1 (CNTN1).